The chain runs to 316 residues: NADH-cytochrome b5 reductase-like (316 aa).

In terms of domain architecture, Oxidoreductase-like spans 17–53 (KPVEPLPSQCCGSGCSPCVFDLYYRDLERWETARARN). The FAD-binding FR-type domain maps to 76 to 178 (ETFLAFHIST…RGPFGSFLYE (103 aa)). Residues 158–173 (ESWR…GPFG) and 183–215 (GELL…TFVT) each bind FAD.

Belongs to the flavoprotein pyridine nucleotide cytochrome reductase family. FAD serves as cofactor.

The enzyme catalyses 2 Fe(III)-[cytochrome b5] + NADH = 2 Fe(II)-[cytochrome b5] + NAD(+) + H(+). In terms of biological role, NADH-cytochrome b5 reductases are involved in desaturation and elongation of fatty acids, cholesterol biosynthesis, drug metabolism, and, in erythrocyte, methemoglobin reduction. In Mus musculus (Mouse), this protein is NADH-cytochrome b5 reductase-like (Cyb5rl).